We begin with the raw amino-acid sequence, 931 residues long: Dipeptidyl aminopeptidase A (931 aa).

Residues 1-13 (MSASTHSHKRKNS) are compositionally biased toward basic residues. The segment at 1–58 (MSASTHSHKRKNSHLFPQRKSSNSSMDKPFFPNNDSVANTDPQSNENGHTINEIRPTE) is disordered. Topologically, residues 1–119 (MSASTHSHKR…GEWSLPEKRS (119 aa)) are cytoplasmic. Residues 33–50 (NNDSVANTDPQSNENGHT) are compositionally biased toward polar residues. Residues 120–140 (YVLVFTLIALSVLVLLVILIP) form a helical; Signal-anchor for type II membrane protein membrane-spanning segment. Topologically, residues 141–931 (SKLLPTKITR…RFDNTEVLHL (791 aa)) are lumenal. An N-linked (GlcNAc...) asparagine glycan is attached at asparagine 377. Serine 785 serves as the catalytic Charge relay system. The N-linked (GlcNAc...) asparagine glycan is linked to asparagine 814. Active-site charge relay system residues include aspartate 863 and histidine 896.

It belongs to the peptidase S9B family.

The protein localises to the vacuole membrane. Responsible for the proteolytic maturation of the alpha-factor precursor. The protein is Dipeptidyl aminopeptidase A (STE13) of Saccharomyces cerevisiae (strain ATCC 204508 / S288c) (Baker's yeast).